The following is a 454-amino-acid chain: UPF0210 protein Blon_2054/BLIJ_2131 (454 aa).

The protein belongs to the UPF0210 family. In terms of assembly, homodimer.

This Bifidobacterium longum subsp. infantis (strain ATCC 15697 / DSM 20088 / JCM 1222 / NCTC 11817 / S12) protein is UPF0210 protein Blon_2054/BLIJ_2131.